The chain runs to 181 residues: CAPA peptides (181 aa).

The N-terminal stretch at 1 to 22 is a signal peptide; sequence MQDNRFFILMILLVFSTSLNQG. Residues 23-29 constitute a propeptide that is removed on maturation; it reads QKLKAND. Isoleucine 41 carries the isoleucine amide modification. Residues 44-54 constitute a propeptide that is removed on maturation; it reads NSEISSFSRSE. Position 65 is an isoleucine amide (isoleucine 65). Residues 68-181 constitute a propeptide that is removed on maturation; that stretch reads SDVSSFDNLN…ENERDTANFL (114 aa). The disordered stretch occupies residues 159-181; that stretch reads TQGQGGYTPRLGRENERDTANFL. The span at 169–181 shows a compositional bias: basic and acidic residues; that stretch reads LGRENERDTANFL.

A pyrokinin potentially constituted by residues Asn-158 to Gly-170 has so far not been detected and might be completely absent in ants. As to expression, periviscerokinin 1 and 2 are expressed in central brain, antennal lobes and gnathal, thoracic and abominal ganglia. Periviscerokinin 2 is also expressed in the retrocerebral complex (at protein level).

The protein localises to the secreted. Its function is as follows. Periviscerokinins mediate visceral muscle contractile activity (myotropic activity). The sequence is that of CAPA peptides from Camponotus floridanus (Florida carpenter ant).